Reading from the N-terminus, the 108-residue chain is Replication restart protein PriB (108 aa).

The region spanning 8-108 (VDNRFSLIGK…LHAEQIEFIE (101 aa)) is the SSB domain.

It belongs to the PriB family. Homodimer. Interacts with PriA and DnaT. Component of the replication restart primosome. Primosome assembly occurs via a 'hand-off' mechanism. PriA binds to replication forks, subsequently PriB then DnaT bind; DnaT then displaces ssDNA to generate the helicase loading substrate.

Functionally, involved in the restart of stalled replication forks, which reloads the replicative helicase on sites other than the origin of replication; the PriA-PriB pathway is the major replication restart pathway. During primosome assembly it facilitates complex formation between PriA and DnaT on DNA; stabilizes PriA on DNA. Stimulates the DNA unwinding activity of PriA helicase. The sequence is that of Replication restart protein PriB from Histophilus somni (strain 2336) (Haemophilus somnus).